The chain runs to 219 residues: MCPARSLLLVATLVLLDYLSLARNLSVATPGPEMFPCLHHSQNLLKAASNTLQKARQILEFYPCTSEEIDHEDITKDKTSTVEACLPLELIKNESCLNSRETSFITNGSCLASRKTSFMMALCLRSIYEDLKMYQVEFKTMNAKLLRDPKRQIFLDQNILGVIDELMQALNFNSETVPQKSSLEEPDFYKTKIKLCILLHAFRIRAVTIDRVMSYLNAS.

The signal sequence occupies residues 1–22 (MCPARSLLLVATLVLLDYLSLA). N-linked (GlcNAc...) asparagine glycosylation is found at Asn24, Asn93, and Asn107. 3 disulfides stabilise this stretch: Cys37–Cys110, Cys64–Cys196, and Cys85–Cys123.

The protein belongs to the IL-6 superfamily. In terms of assembly, heterodimer with IL12B; disulfide-linked. This heterodimer is known as interleukin IL-12. Heterodimer with EBI3/IL27B; not disulfide-linked. This heterodimer is known as interleukin IL-35. Interacts with NBR1; this interaction promotes IL-12 secretion.

The protein localises to the secreted. In terms of biological role, heterodimerizes with IL12B to form the IL-12 cytokine or with EBI3/IL27B to form the IL-35 cytokine. IL-12 is primarily produced by professional antigen-presenting cells (APCs) such as B-cells and dendritic cells (DCs) as well as macrophages and granulocytes and regulates T-cell and natural killer-cell responses, induces the production of interferon-gamma (IFN-gamma), favors the differentiation of T-helper 1 (Th1) cells and is an important link between innate resistance and adaptive immunity. Mechanistically, exerts its biological effects through a receptor composed of IL12R1 and IL12R2 subunits. Binding to the receptor results in the rapid tyrosine phosphorylation of a number of cellular substrates including the JAK family kinases TYK2 and JAK2. In turn, recruited STAT4 gets phosphorylated and translocates to the nucleus where it regulates cytokine/growth factor responsive genes. As part of IL-35, plays essential roles in maintaining the immune homeostasis of the liver microenvironment and also functions as an immune-suppressive cytokine. Mediates biological events through unconventional receptors composed of IL12RB2 and gp130/IL6ST heterodimers or homodimers. Signaling requires the transcription factors STAT1 and STAT4, which form a unique heterodimer that binds to distinct DNA sites. The chain is Interleukin-12 subunit alpha (IL12A) from Macaca mulatta (Rhesus macaque).